Reading from the N-terminus, the 227-residue chain is Cytochrome c oxidase subunit 2 (227 aa).

The Mitochondrial intermembrane portion of the chain corresponds to 1–14 (MAYPLQLGLQDATS). The helical transmembrane segment at 15-45 (PIMEELTSFHDHTLMIVFLISSLVLYIISSM) threads the bilayer. Over 46-59 (LTTKMTHTNTMDAQ) the chain is Mitochondrial matrix. Residues 60-87 (GVETIWTILPAAILVLIALPSLRILYMM) form a helical membrane-spanning segment. Over 88–227 (DEINNPALTV…HFENWSASMI (140 aa)) the chain is Mitochondrial intermembrane. The Cu cation site is built by His161, Cys196, Glu198, Cys200, His204, and Met207. Glu198 is a Mg(2+) binding site.

This sequence belongs to the cytochrome c oxidase subunit 2 family. Component of the cytochrome c oxidase (complex IV, CIV), a multisubunit enzyme composed of 14 subunits. The complex is composed of a catalytic core of 3 subunits MT-CO1, MT-CO2 and MT-CO3, encoded in the mitochondrial DNA, and 11 supernumerary subunits COX4I, COX5A, COX5B, COX6A, COX6B, COX6C, COX7A, COX7B, COX7C, COX8 and NDUFA4, which are encoded in the nuclear genome. The complex exists as a monomer or a dimer and forms supercomplexes (SCs) in the inner mitochondrial membrane with NADH-ubiquinone oxidoreductase (complex I, CI) and ubiquinol-cytochrome c oxidoreductase (cytochrome b-c1 complex, complex III, CIII), resulting in different assemblies (supercomplex SCI(1)III(2)IV(1) and megacomplex MCI(2)III(2)IV(2)). Found in a complex with TMEM177, COA6, COX18, COX20, SCO1 and SCO2. Interacts with TMEM177 in a COX20-dependent manner. Interacts with COX20. Interacts with COX16. The cofactor is Cu cation.

It localises to the mitochondrion inner membrane. It catalyses the reaction 4 Fe(II)-[cytochrome c] + O2 + 8 H(+)(in) = 4 Fe(III)-[cytochrome c] + 2 H2O + 4 H(+)(out). Its function is as follows. Component of the cytochrome c oxidase, the last enzyme in the mitochondrial electron transport chain which drives oxidative phosphorylation. The respiratory chain contains 3 multisubunit complexes succinate dehydrogenase (complex II, CII), ubiquinol-cytochrome c oxidoreductase (cytochrome b-c1 complex, complex III, CIII) and cytochrome c oxidase (complex IV, CIV), that cooperate to transfer electrons derived from NADH and succinate to molecular oxygen, creating an electrochemical gradient over the inner membrane that drives transmembrane transport and the ATP synthase. Cytochrome c oxidase is the component of the respiratory chain that catalyzes the reduction of oxygen to water. Electrons originating from reduced cytochrome c in the intermembrane space (IMS) are transferred via the dinuclear copper A center (CU(A)) of subunit 2 and heme A of subunit 1 to the active site in subunit 1, a binuclear center (BNC) formed by heme A3 and copper B (CU(B)). The BNC reduces molecular oxygen to 2 water molecules using 4 electrons from cytochrome c in the IMS and 4 protons from the mitochondrial matrix. The chain is Cytochrome c oxidase subunit 2 (MT-CO2) from Acomys ignitus (Fiery spiny mouse).